A 1366-amino-acid polypeptide reads, in one-letter code: DNA-directed RNA polymerase subunit beta' (1366 aa).

Residues 1-23 are compositionally biased toward basic residues; that stretch reads MTSSKPKKSSRVRKTSKNSKKNN. Positions 1–25 are disordered; sequence MTSSKPKKSSRVRKTSKNSKKNNKI. The Zn(2+) site is built by Cys-248, Cys-315, Cys-322, and Cys-325. The tract at residues 1290-1366 is disordered; sequence DYTVDMPQSP…LQEEGLLSDE (77 aa). The span at 1295 to 1305 shows a compositional bias: polar residues; that stretch reads MPQSPTVSSTA. The span at 1354 to 1366 shows a compositional bias: low complexity; it reads LEGLQEEGLLSDE.

The protein belongs to the RNA polymerase beta' chain family. RpoC2 subfamily. In terms of assembly, in cyanobacteria the RNAP catalytic core is composed of 2 alpha, 1 beta, 1 beta', 1 gamma and 1 omega subunit. When a sigma factor is associated with the core the holoenzyme is formed, which can initiate transcription. Requires Zn(2+) as cofactor.

The catalysed reaction is RNA(n) + a ribonucleoside 5'-triphosphate = RNA(n+1) + diphosphate. Functionally, DNA-dependent RNA polymerase catalyzes the transcription of DNA into RNA using the four ribonucleoside triphosphates as substrates. This is DNA-directed RNA polymerase subunit beta' from Prochlorococcus marinus (strain MIT 9515).